We begin with the raw amino-acid sequence, 278 residues long: DNA repair protein RecO (278 aa).

Polar residues predominate over residues 1–12 (MGTNDALTSTED). The disordered stretch occupies residues 1–42 (MGTNDALTSTEDAVTAGANDAPLPAPPEPPRKARRATSRTSD).

The protein belongs to the RecO family.

Its function is as follows. Involved in DNA repair and RecF pathway recombination. The chain is DNA repair protein RecO from Burkholderia lata (strain ATCC 17760 / DSM 23089 / LMG 22485 / NCIMB 9086 / R18194 / 383).